Reading from the N-terminus, the 704-residue chain is Low calcium response locus protein D (704 aa).

7 helical membrane passes run Ile-18–Leu-35, Ile-42–Ile-61, Phe-108–Ile-132, Ala-200–Thr-220, Ile-235–Val-259, Val-278–Leu-297, and Val-304–Leu-320.

Belongs to the FHIPEP (flagella/HR/invasion proteins export pore) family.

It is found in the cell inner membrane. Its function is as follows. Could be involved in the secretion of the yop virulence proteins. The chain is Low calcium response locus protein D (lcrD) from Yersinia pestis.